The chain runs to 315 residues: tRNA dimethylallyltransferase (315 aa).

13–20 contributes to the ATP binding site; sequence GPTASGKT. 15-20 lines the substrate pocket; sequence TASGKT. Interaction with substrate tRNA regions lie at residues 38–41, 162–166, 243–248, and 276–283; these read DSAL, QRLSR, RCVGYR, and KRQITWLR.

This sequence belongs to the IPP transferase family. Monomer. The cofactor is Mg(2+).

The enzyme catalyses adenosine(37) in tRNA + dimethylallyl diphosphate = N(6)-dimethylallyladenosine(37) in tRNA + diphosphate. In terms of biological role, catalyzes the transfer of a dimethylallyl group onto the adenine at position 37 in tRNAs that read codons beginning with uridine, leading to the formation of N6-(dimethylallyl)adenosine (i(6)A). The sequence is that of tRNA dimethylallyltransferase from Vibrio vulnificus (strain YJ016).